The following is a 319-amino-acid chain: Ornithine carbamoyltransferase (319 aa).

Residues 57–60, Gln-84, Arg-108, and 135–138 contribute to the carbamoyl phosphate site; these read STRT and HPCQ. Residues Asn-166, Asp-230, and 234-235 contribute to the L-ornithine site; that span reads SM. Residues 270-271 and Arg-298 contribute to the carbamoyl phosphate site; that span reads CL.

Belongs to the aspartate/ornithine carbamoyltransferase superfamily. OTCase family.

The protein resides in the cytoplasm. It carries out the reaction carbamoyl phosphate + L-ornithine = L-citrulline + phosphate + H(+). Its pathway is amino-acid biosynthesis; L-arginine biosynthesis; L-arginine from L-ornithine and carbamoyl phosphate: step 1/3. Its function is as follows. Reversibly catalyzes the transfer of the carbamoyl group from carbamoyl phosphate (CP) to the N(epsilon) atom of ornithine (ORN) to produce L-citrulline. This is Ornithine carbamoyltransferase (argF) from Bacillus subtilis (strain 168).